The sequence spans 293 residues: Ribosomal protein L11 methyltransferase (293 aa).

S-adenosyl-L-methionine-binding residues include T145, G166, D188, and N230.

The protein belongs to the methyltransferase superfamily. PrmA family.

It localises to the cytoplasm. It catalyses the reaction L-lysyl-[protein] + 3 S-adenosyl-L-methionine = N(6),N(6),N(6)-trimethyl-L-lysyl-[protein] + 3 S-adenosyl-L-homocysteine + 3 H(+). Its function is as follows. Methylates ribosomal protein L11. The sequence is that of Ribosomal protein L11 methyltransferase from Shewanella sp. (strain ANA-3).